A 325-amino-acid chain; its full sequence is Coiled-coil domain-containing protein 130 homolog (325 aa).

The stretch at 156-262 (LKLENKKLDI…KLKRELIKNE (107 aa)) forms a coiled coil.

It belongs to the CWC16 family.

In Dictyostelium discoideum (Social amoeba), this protein is Coiled-coil domain-containing protein 130 homolog.